A 721-amino-acid polypeptide reads, in one-letter code: Polyribonucleotide nucleotidyltransferase (721 aa).

Mg(2+) contacts are provided by D495 and D501. The KH domain occupies 562-621 (PRLLSFRIDPELIGTVIGPGGRTIKGITERTNTKIDIEDGGIVTIASHDGAAAEEAQKII). Residues 631-699 (GEIFSGVVTR…SRGRINLTLR (69 aa)) enclose the S1 motif domain. The disordered stretch occupies residues 701–721 (VGQNNGMSYPEPTPTPVAPLN). The span at 711 to 721 (EPTPTPVAPLN) shows a compositional bias: pro residues.

It belongs to the polyribonucleotide nucleotidyltransferase family. It depends on Mg(2+) as a cofactor.

Its subcellular location is the cytoplasm. It carries out the reaction RNA(n+1) + phosphate = RNA(n) + a ribonucleoside 5'-diphosphate. Involved in mRNA degradation. Catalyzes the phosphorolysis of single-stranded polyribonucleotides processively in the 3'- to 5'-direction. The polypeptide is Polyribonucleotide nucleotidyltransferase (Prochlorococcus marinus (strain MIT 9215)).